The following is a 154-amino-acid chain: Small ribosomal subunit protein uS9 (154 aa).

The disordered stretch occupies residues 133-154 (RAKESKKYGLKKARKAPQYSKR). Positions 140-154 (YGLKKARKAPQYSKR) are enriched in basic residues.

This sequence belongs to the universal ribosomal protein uS9 family.

This Salinispora tropica (strain ATCC BAA-916 / DSM 44818 / JCM 13857 / NBRC 105044 / CNB-440) protein is Small ribosomal subunit protein uS9.